The primary structure comprises 487 residues: Sugar transporter ERD6-like 6 (487 aa).

Ser2 is subject to N-acetylserine. 12 helical membrane-spanning segments follow: residues 46 to 66 (ISVLACVLIVALGPIQFGFTC), 89 to 109 (VFGSLSNVGAMVGAIASGQIA), 115 to 135 (KGSLMIAAIPNIIGWLCISFA), 146 to 166 (LLEGFGVGIISYTVPVYIAEI), 178 to 198 (VNQLSVTIGIMLAYLLGLFVP), 201 to 221 (ILAVLGILPCTLLIPGLFFIP), 284 to 304 (LMVGIGLLVLQQLGGINGVLF), 320 to 340 (AATFGVGAIQVVATAISTWLV), 347 to 367 (LLLTISSVGMTISLVIVAAAF), 389 to 409 (VGVVAMVVFFSLGMGPIPWLI), 425 to 445 (IATLANWFFSWLITMTANLLL), and 451 to 471 (GTFTLYGLVCAFTVVFVTLWV).

Belongs to the major facilitator superfamily. Sugar transporter (TC 2.A.1.1) family.

The protein resides in the membrane. Sugar transporter. The sequence is that of Sugar transporter ERD6-like 6 from Arabidopsis thaliana (Mouse-ear cress).